Reading from the N-terminus, the 79-residue chain is D-alanyl carrier protein (79 aa).

A Carrier domain is found at 1–77; sequence MDTKQGVLDI…KIVAKVESLE (77 aa). At Ser-35 the chain carries O-(pantetheine 4'-phosphoryl)serine.

The protein belongs to the DltC family. Post-translationally, 4'-phosphopantetheine is transferred from CoA to a specific serine of apo-DCP.

Its subcellular location is the cytoplasm. It participates in cell wall biogenesis; lipoteichoic acid biosynthesis. Its function is as follows. Carrier protein involved in the D-alanylation of lipoteichoic acid (LTA). The loading of thioester-linked D-alanine onto DltC is catalyzed by D-alanine--D-alanyl carrier protein ligase DltA. The DltC-carried D-alanyl group is further transferred to cell membrane phosphatidylglycerol (PG) by forming an ester bond, probably catalyzed by DltD. D-alanylation of LTA plays an important role in modulating the properties of the cell wall in Gram-positive bacteria, influencing the net charge of the cell wall. The protein is D-alanyl carrier protein of Lactobacillus acidophilus (strain ATCC 700396 / NCK56 / N2 / NCFM).